We begin with the raw amino-acid sequence, 339 residues long: Tetraacyldisaccharide 4'-kinase (339 aa).

Residue 58–65 (TVGGSGKT) coordinates ATP.

Belongs to the LpxK family.

It carries out the reaction a lipid A disaccharide + ATP = a lipid IVA + ADP + H(+). The protein operates within glycolipid biosynthesis; lipid IV(A) biosynthesis; lipid IV(A) from (3R)-3-hydroxytetradecanoyl-[acyl-carrier-protein] and UDP-N-acetyl-alpha-D-glucosamine: step 6/6. Its function is as follows. Transfers the gamma-phosphate of ATP to the 4'-position of a tetraacyldisaccharide 1-phosphate intermediate (termed DS-1-P) to form tetraacyldisaccharide 1,4'-bis-phosphate (lipid IVA). This Shewanella baltica (strain OS195) protein is Tetraacyldisaccharide 4'-kinase.